The sequence spans 319 residues: Phenoxybenzoate dioxygenase subunit beta (319 aa).

The region spanning 7–109 is the FAD-binding FR-type domain; that stretch reads MAPVSLRIHA…DGPSNHFALD (103 aa). 113–223 lines the NAD(+) pocket; it reads PHAVFIAGGI…PARVHLEYFA (111 aa). Residues 234-319 form the 2Fe-2S ferredoxin-type domain; that stretch reads FVVHLARSGR…SKTAELTLDL (86 aa). [2Fe-2S] cluster contacts are provided by Cys268, Cys273, Cys276, and Cys306.

This sequence belongs to the PDR/VanB family. As to quaternary structure, this dioxygenase system consists of two proteins: the alpha subunit (PobA) and a subunit (PobB) that acts as a ferredoxin and a ferredoxin reductase. Requires FMN as cofactor.

It participates in aromatic compound metabolism; carboxydiphenyl ether degradation. In terms of biological role, degrades exclusively diarylether compounds having carboxyl groups in the 3- or 4-position. Yields a hemiacetal that spontaneously hydrolyzes to phenol and protocatechuate. The protein is Phenoxybenzoate dioxygenase subunit beta (pobB) of Ectopseudomonas oleovorans (Pseudomonas oleovorans).